We begin with the raw amino-acid sequence, 188 residues long: RxLR effector protein Avh241 (188 aa).

The signal sequence occupies residues 1-16 (MRQYCLLLIVLALAAA). The RxLR-dEER motif lies at 43-58 (RLLRSEPQDEDTFEDR). A Host plasma membrane localization motif motif is present at residues 73-78 (GAAKAK).

This sequence belongs to the RxLR effector family.

The protein localises to the secreted. It is found in the host cell membrane. Functionally, effector that triggers cell death in a variety of plant species (including tobacco, tomato and soybean), regardless of the Rps genes present. Avh241 interacts with the plant immune system via at least two different mechanisms, one recognized by plants dependent on subcellular localization and one promoting infection independent on membrane localization. The cell death triggered by Avh241 in N.benthamiana requires the two host mitogen-activated protein kinases, MEK2 and WIPK. The sequence is that of RxLR effector protein Avh241 from Phytophthora sojae (strain P6497) (Soybean stem and root rot agent).